The chain runs to 144 residues: MTTPSMEDYIEQIYMLIEEKGYARVSDIAEALAVHPSSVTKMVQKLDKDEYLIYEKYRGLILTPKGKKIGKRLVYRHELLEQFLRIIGVDEEKIYDDVEGIEHHLSWNSIDRIGDLVQFFEESDERSVQLKAIQKKNEQTNQES.

In terms of domain architecture, HTH dtxR-type spans 1–63 (MTTPSMEDYI…YEKYRGLILT (63 aa)). Asp-8, Glu-11, His-77, Glu-99, Glu-102, and His-103 together coordinate Mn(2+).

The protein belongs to the DtxR/MntR family. As to quaternary structure, homodimer.

Its subcellular location is the cytoplasm. With respect to regulation, DNA binding is strongly activated by Mn(2+). Functionally, central regulator of manganese homeostasis. This Bacillus pumilus (strain SAFR-032) protein is HTH-type transcriptional regulator MntR.